The chain runs to 488 residues: Bifunctional protein GlmU (488 aa).

Positions 1–237 (MPRTRTPLAA…AEEASGVNDR (237 aa)) are pyrophosphorylase. Residues 13-16 (LAAG), K27, Q82, 87-88 (GT), 110-112 (SGD), G149, E164, N179, and N235 contribute to the UDP-N-acetyl-alpha-D-glucosamine site. A Mg(2+)-binding site is contributed by D112. Residue N235 coordinates Mg(2+). The tract at residues 238-258 (IELARANRVMVGRLAEAFMRA) is linker. Residues 259 to 488 (GVTIEDPARF…KGRPAARRAS (230 aa)) are N-acetyltransferase. R341 and K359 together coordinate UDP-N-acetyl-alpha-D-glucosamine. The active-site Proton acceptor is the H371. Residues Y374 and N385 each coordinate UDP-N-acetyl-alpha-D-glucosamine. Acetyl-CoA-binding positions include A388, 394-395 (NY), S413, A431, and R448. The disordered stretch occupies residues 459 to 488 (AQRQAEKQMKGTATGPAPARKGRPAARRAS). A compositionally biased stretch (basic residues) spans 478 to 488 (RKGRPAARRAS).

This sequence in the N-terminal section; belongs to the N-acetylglucosamine-1-phosphate uridyltransferase family. In the C-terminal section; belongs to the transferase hexapeptide repeat family. As to quaternary structure, homotrimer. Requires Mg(2+) as cofactor.

Its subcellular location is the cytoplasm. It catalyses the reaction alpha-D-glucosamine 1-phosphate + acetyl-CoA = N-acetyl-alpha-D-glucosamine 1-phosphate + CoA + H(+). It carries out the reaction N-acetyl-alpha-D-glucosamine 1-phosphate + UTP + H(+) = UDP-N-acetyl-alpha-D-glucosamine + diphosphate. It participates in nucleotide-sugar biosynthesis; UDP-N-acetyl-alpha-D-glucosamine biosynthesis; N-acetyl-alpha-D-glucosamine 1-phosphate from alpha-D-glucosamine 6-phosphate (route II): step 2/2. The protein operates within nucleotide-sugar biosynthesis; UDP-N-acetyl-alpha-D-glucosamine biosynthesis; UDP-N-acetyl-alpha-D-glucosamine from N-acetyl-alpha-D-glucosamine 1-phosphate: step 1/1. Its pathway is bacterial outer membrane biogenesis; LPS lipid A biosynthesis. In terms of biological role, catalyzes the last two sequential reactions in the de novo biosynthetic pathway for UDP-N-acetylglucosamine (UDP-GlcNAc). The C-terminal domain catalyzes the transfer of acetyl group from acetyl coenzyme A to glucosamine-1-phosphate (GlcN-1-P) to produce N-acetylglucosamine-1-phosphate (GlcNAc-1-P), which is converted into UDP-GlcNAc by the transfer of uridine 5-monophosphate (from uridine 5-triphosphate), a reaction catalyzed by the N-terminal domain. In Anaeromyxobacter dehalogenans (strain 2CP-C), this protein is Bifunctional protein GlmU.